A 304-amino-acid chain; its full sequence is Non-specific ribonucleoside hydrolase RihC (304 aa).

His-233 is an active-site residue.

The protein belongs to the IUNH family. RihC subfamily.

Functionally, hydrolyzes both purine and pyrimidine ribonucleosides with a broad-substrate specificity. This Escherichia coli O8 (strain IAI1) protein is Non-specific ribonucleoside hydrolase RihC.